The chain runs to 411 residues: Probable glutamate dehydrogenase 3 (411 aa).

The active site involves Lys-102.

The protein belongs to the Glu/Leu/Phe/Val dehydrogenases family.

It carries out the reaction L-glutamate + NAD(+) + H2O = 2-oxoglutarate + NH4(+) + NADH + H(+). It catalyses the reaction L-glutamate + NADP(+) + H2O = 2-oxoglutarate + NH4(+) + NADPH + H(+). In Arabidopsis thaliana (Mouse-ear cress), this protein is Probable glutamate dehydrogenase 3 (GSH3).